We begin with the raw amino-acid sequence, 265 residues long: UPF0354 protein GWCH70_2742 (265 aa).

This sequence belongs to the UPF0354 family.

The chain is UPF0354 protein GWCH70_2742 from Geobacillus sp. (strain WCH70).